Here is a 722-residue protein sequence, read N- to C-terminus: Endoglucanase F (722 aa).

The first 29 residues, 1 to 29 (MSKNFKRVGAVAVAAAMSLSIMATTSINA), serve as a signal peptide directing secretion. Residues 142–165 (PEFQDPSKYPSPLDTSQPVGRDPI) are disordered. Over residues 154-165 (LDTSQPVGRDPI) the composition is skewed to polar residues. The Dockerin domain maps to 661–722 (PEKLLGDVNG…LLKKALLSIQ (62 aa)).

Belongs to the glycosyl hydrolase 48 (cellulase L) family.

It catalyses the reaction Endohydrolysis of (1-&gt;4)-beta-D-glucosidic linkages in cellulose, lichenin and cereal beta-D-glucans.. Its function is as follows. Probable endoglucanase involved in the degradation of cellulose or related beta-glucans. The chain is Endoglucanase F (celCCF) from Ruminiclostridium cellulolyticum (strain ATCC 35319 / DSM 5812 / JCM 6584 / H10) (Clostridium cellulolyticum).